Reading from the N-terminus, the 342-residue chain is MVSVKKIVASALVGVLMFSAVGCNMVEKTQAAIDKTTVATVNGEKITLGEVDSHLKGVFAQMKSQYGDKYMDDPQVAQQILQQRQSVVQGLVTDKVLGIEADKLGIKPSEEEIKKKVDEQFENIKKGMGDNFDKALEAEGYTEDTFKDVIKNQVINQAVQDYIIKDVKVTDEDAQKYYDENKQQFVAKDSGVLTKHLLFENEEEAQKAYDEIQSGKTTFNDLFTKYENNKSENKKPIAENLGVVPAENSGLVQEFVDGLKPLKEGEISKPIKTQFGYHIIQAGATYEKGAQLPFDDVKSQIIQILKQQKDSEKFKADMDQWKKDLNVKVYDDKLQEGLKISK.

An N-terminal signal peptide occupies residues 1–22 (MVSVKKIVASALVGVLMFSAVG). Residue C23 is the site of N-palmitoyl cysteine attachment. C23 carries S-diacylglycerol cysteine lipidation. The PpiC domain occupies 189–284 (DSGVLTKHLL…FGYHIIQAGA (96 aa)).

This sequence belongs to the PrsA family.

It is found in the cell membrane. The enzyme catalyses [protein]-peptidylproline (omega=180) = [protein]-peptidylproline (omega=0). Plays a major role in protein secretion by helping the post-translocational extracellular folding of several secreted proteins. The sequence is that of Foldase protein PrsA from Clostridium perfringens (strain ATCC 13124 / DSM 756 / JCM 1290 / NCIMB 6125 / NCTC 8237 / Type A).